The primary structure comprises 223 residues: dITP/XTP pyrophosphatase (223 aa).

9 to 14 lines the substrate pocket; it reads TTNQNK. D71 acts as the Proton acceptor in catalysis. D71 provides a ligand contact to Mg(2+). Residues S72, 152-155, K175, and 180-181 each bind substrate; these read FGYD and HR. Residues 203 to 223 are disordered; it reads LSEEKPAKPDHSEFEGNDWSK.

This sequence belongs to the HAM1 NTPase family. As to quaternary structure, homodimer. The cofactor is Mg(2+).

It catalyses the reaction XTP + H2O = XMP + diphosphate + H(+). It carries out the reaction dITP + H2O = dIMP + diphosphate + H(+). The catalysed reaction is ITP + H2O = IMP + diphosphate + H(+). Functionally, pyrophosphatase that catalyzes the hydrolysis of nucleoside triphosphates to their monophosphate derivatives, with a high preference for the non-canonical purine nucleotides XTP (xanthosine triphosphate), dITP (deoxyinosine triphosphate) and ITP. Seems to function as a house-cleaning enzyme that removes non-canonical purine nucleotides from the nucleotide pool, thus preventing their incorporation into DNA/RNA and avoiding chromosomal lesions. This Desulfotalea psychrophila (strain LSv54 / DSM 12343) protein is dITP/XTP pyrophosphatase.